The following is a 360-amino-acid chain: uncharacterized protein (360 aa).

Positions 11 to 40 (KEEVWDTNRCSGCGACVAVCPVNNLYFREE) constitute a 4Fe-4S ferredoxin-type domain.

This sequence belongs to the FrhB family.

This is an uncharacterized protein from Methanocaldococcus jannaschii (strain ATCC 43067 / DSM 2661 / JAL-1 / JCM 10045 / NBRC 100440) (Methanococcus jannaschii).